Reading from the N-terminus, the 167-residue chain is Troponin C-akin-1 protein (167 aa).

Y17–L20 is a binding site for substrate. E92 (proton acceptor) is an active-site residue.

Belongs to the gamma-glutamylcyclotransferase family. In terms of tissue distribution, in embryos, expression is seen in heart cells of the dorsal vessel and hindgut visceral mesoderm.

Its function is as follows. Putative gamma-glutamylcyclotransferase. The sequence is that of Troponin C-akin-1 protein (Tina-1) from Drosophila melanogaster (Fruit fly).